A 197-amino-acid chain; its full sequence is Holliday junction branch migration complex subunit RuvA (197 aa).

The tract at residues 1–63 (MIALLNGQLI…EDALLLFGFL (63 aa)) is domain I. The domain II stretch occupies residues 64-142 (TETEKDLFGL…PVQAVPGNAP (79 aa)). Residues 142-146 (PLPAE) are flexible linker. Residues 147 to 197 (TAGDLREDALSALVNLGYKENLSRKALDGIDTAPDAPLEDILKQALKLLMR) form a domain III region.

This sequence belongs to the RuvA family. As to quaternary structure, homotetramer. Forms an RuvA(8)-RuvB(12)-Holliday junction (HJ) complex. HJ DNA is sandwiched between 2 RuvA tetramers; dsDNA enters through RuvA and exits via RuvB. An RuvB hexamer assembles on each DNA strand where it exits the tetramer. Each RuvB hexamer is contacted by two RuvA subunits (via domain III) on 2 adjacent RuvB subunits; this complex drives branch migration. In the full resolvosome a probable DNA-RuvA(4)-RuvB(12)-RuvC(2) complex forms which resolves the HJ.

It localises to the cytoplasm. Its function is as follows. The RuvA-RuvB-RuvC complex processes Holliday junction (HJ) DNA during genetic recombination and DNA repair, while the RuvA-RuvB complex plays an important role in the rescue of blocked DNA replication forks via replication fork reversal (RFR). RuvA specifically binds to HJ cruciform DNA, conferring on it an open structure. The RuvB hexamer acts as an ATP-dependent pump, pulling dsDNA into and through the RuvAB complex. HJ branch migration allows RuvC to scan DNA until it finds its consensus sequence, where it cleaves and resolves the cruciform DNA. In Syntrophotalea carbinolica (strain DSM 2380 / NBRC 103641 / GraBd1) (Pelobacter carbinolicus), this protein is Holliday junction branch migration complex subunit RuvA.